We begin with the raw amino-acid sequence, 529 residues long: Transcription activator of gluconeogenesis ERT1 (529 aa).

The disordered stretch occupies residues 1 to 31 (MCTPDENDYKTSTDPDTSANTNHTLEKKKRK). Residues 14–23 (DPDTSANTNH) are compositionally biased toward polar residues. The segment at residues 40–68 (CVNCSRLHVSCEAKRPCLRCISKGLTATC) is a DNA-binding region (zn(2)-C6 fungal-type). The span at 174 to 193 (SNSTIGNSSNNSPTGTNTSP) shows a compositional bias: low complexity. The tract at residues 174–198 (SNSTIGNSSNNSPTGTNTSPEETEM) is disordered. A PAS domain is found at 408–480 (TLLEYVKFIA…KTLSKVAYRD (73 aa)).

Belongs to the ERT1/acuK family.

The protein resides in the cytoplasm. It localises to the nucleus. Transcription factor which regulates nonfermentable carbon utilization. Activator of gluconeogenetic genes like PCK1. Involved in restriction of Ty1 transposition. This is Transcription activator of gluconeogenesis ERT1 (ERT1) from Saccharomyces cerevisiae (strain ATCC 204508 / S288c) (Baker's yeast).